A 100-amino-acid polypeptide reads, in one-letter code: NADH-quinone oxidoreductase subunit K (100 aa).

The next 3 membrane-spanning stretches (helical) occupy residues 1 to 21, 28 to 48, and 64 to 84; these read MIGL…GLAG, ILLL…GFVA, and FIIA…ILWF.

It belongs to the complex I subunit 4L family. NDH-1 is composed of 14 different subunits. Subunits NuoA, H, J, K, L, M, N constitute the membrane sector of the complex.

The protein resides in the cell inner membrane. It carries out the reaction a quinone + NADH + 5 H(+)(in) = a quinol + NAD(+) + 4 H(+)(out). Its function is as follows. NDH-1 shuttles electrons from NADH, via FMN and iron-sulfur (Fe-S) centers, to quinones in the respiratory chain. The immediate electron acceptor for the enzyme in this species is believed to be ubiquinone. Couples the redox reaction to proton translocation (for every two electrons transferred, four hydrogen ions are translocated across the cytoplasmic membrane), and thus conserves the redox energy in a proton gradient. In Helicobacter pylori (strain Shi470), this protein is NADH-quinone oxidoreductase subunit K.